The primary structure comprises 302 residues: Zinc finger protein-like 1 homolog (302 aa).

The B box-type; degenerate zinc-finger motif lies at 1–43; the sequence is MGLCKCPKRLVTNQFCFEHRVNVCEHCMVQSHPKCIVQSYLQW. The RING-type; atypical zinc-finger motif lies at 53 to 101; sequence CNLCGTSLEQGECVRLVCYHVFHWDCLNARQAALPANTAPRGHQCPGCS. A disordered region spans residues 168 to 233; sequence IHSGGERERG…RDDNKYQRRT (66 aa). Residues 198–208 are compositionally biased toward polar residues; sequence PPSSGDFNASS. Position 217 is a phosphoserine (S217). The chain crosses the membrane as a helical span at residues 258–278; sequence WFLVLSGILAFVMFIYLLAWM.

It belongs to the ZFPL1 family.

The protein localises to the membrane. The polypeptide is Zinc finger protein-like 1 homolog (Drosophila pseudoobscura pseudoobscura (Fruit fly)).